The sequence spans 599 residues: MGNTCVGPSISKNGFFQSVSTVLWKARQDGDDALPGANGAPDGGGQGRLPAPPPPTSDAPLAVQNKPPEHVKIVSTTDTASAEQDASKSSAGSDSGEAARPRPRVPPVKRVSSAGLLVGSVLKRKTESLKDKYSLGRKLGQGQFGTTYLCVERATGKEFACKSILKRKLVTDDDVEDVRREIQIMYHLAGHPNVISIRGAYEDAVAVHLVMELCAGGELFDRIVQKGHYTERKAAELARVIVGVVEVCHSMGVMHRDLKPENFLFADQTEEAALKTIDFGLSIFFRPGQVFTDVVGSPYYVAPEVLKKKYGQEADVWSAGVIIYILLCGVPPFWAENEQGIFEEVLHGRLDFQSEPWPSISEGAKDLVRRMLVRDPKKRLTAHEVLRHPWVQVGGLAPDKPLDSAVLSRMKQFSAMNKLKKMALRVIAENLSEDEIAGLKEMFKMIDTDNSGQITFEELKVGLKKVGANLQESEIYALMQAADVDNSGTIDYGEFIAATLHMNKIEREDHLFAAFQYFDKDGSGYITADELQLACEEFGLGDVQLEEMIREVDEDNDGRIDYNEFVAMMQKPTMGLPAKKSGGLQNSFSIGFREALRMS.

Gly-2 carries N-myristoyl glycine lipidation. The disordered stretch occupies residues 27–110; that stretch reads RQDGDDALPG…PRPRVPPVKR (84 aa). Residues 74 to 84 are compositionally biased toward polar residues; it reads VSTTDTASAEQ. Positions 87-98 are enriched in low complexity; it reads SKSSAGSDSGEA. The Protein kinase domain maps to 133 to 391; that stretch reads YSLGRKLGQG…AHEVLRHPWV (259 aa). Residues 139 to 147 and Lys-162 each bind ATP; that span reads LGQGQFGTT. The active-site Proton acceptor is Asp-257. The tract at residues 397–427 is autoinhibitory domain; sequence APDKPLDSAVLSRMKQFSAMNKLKKMALRVI. EF-hand domains lie at 434–469, 470–505, 506–541, and 544–575; these read DEIAGLKEMFKMIDTDNSGQITFEELKVGLKKVGAN, LQESEIYALMQAADVDNSGTIDYGEFIAATLHMNKI, EREDHLFAAFQYFDKDGSGYITADELQLACEEFGLG, and QLEEMIREVDEDNDGRIDYNEFVAMMQKPTMG. Residues Asp-447, Asp-449, Ser-451, Gln-453, Glu-458, Asp-483, Asp-485, Ser-487, Thr-489, Glu-494, Asp-519, Asp-521, Ser-523, Tyr-525, Glu-530, Asp-553, Asp-555, Asp-557, Arg-559, and Glu-564 each coordinate Ca(2+).

Belongs to the protein kinase superfamily. Ser/Thr protein kinase family. CDPK subfamily. In terms of tissue distribution, expressed in roots.

It is found in the membrane. The enzyme catalyses L-seryl-[protein] + ATP = O-phospho-L-seryl-[protein] + ADP + H(+). It catalyses the reaction L-threonyl-[protein] + ATP = O-phospho-L-threonyl-[protein] + ADP + H(+). With respect to regulation, activated by calcium. Autophosphorylation may play an important role in the regulation of the kinase activity. In terms of biological role, may play a role in signal transduction pathways that involve calcium as a second messenger. The sequence is that of Calcium-dependent protein kinase 10 from Oryza sativa subsp. japonica (Rice).